Consider the following 386-residue polypeptide: Formate-dependent phosphoribosylglycinamide formyltransferase (386 aa).

N(1)-(5-phospho-beta-D-ribosyl)glycinamide is bound by residues 15–16 and E75; that span reads EL. ATP is bound by residues R107, K148, 153-158, 188-191, and E196; these read SSGKGQ and EQFI. An ATP-grasp domain is found at 112–301; that stretch reads ALAVQQLNLQ…EFELHLRAIV (190 aa). Positions 260 and 272 each coordinate Mg(2+). N(1)-(5-phospho-beta-D-ribosyl)glycinamide is bound by residues D279, K349, and 356 to 357; that span reads RR.

This sequence belongs to the PurK/PurT family. In terms of assembly, homodimer.

The catalysed reaction is N(1)-(5-phospho-beta-D-ribosyl)glycinamide + formate + ATP = N(2)-formyl-N(1)-(5-phospho-beta-D-ribosyl)glycinamide + ADP + phosphate + H(+). It participates in purine metabolism; IMP biosynthesis via de novo pathway; N(2)-formyl-N(1)-(5-phospho-D-ribosyl)glycinamide from N(1)-(5-phospho-D-ribosyl)glycinamide (formate route): step 1/1. Its function is as follows. Involved in the de novo purine biosynthesis. Catalyzes the transfer of formate to 5-phospho-ribosyl-glycinamide (GAR), producing 5-phospho-ribosyl-N-formylglycinamide (FGAR). Formate is provided by PurU via hydrolysis of 10-formyl-tetrahydrofolate. The polypeptide is Formate-dependent phosphoribosylglycinamide formyltransferase (Francisella tularensis subsp. holarctica (strain LVS)).